A 333-amino-acid chain; its full sequence is Protoheme IX farnesyltransferase (333 aa).

Helical transmembrane passes span 64 to 84 (LICTLGGGALAAAAAGALNCL), 110 to 130 (TVFLAAVSCTLAASMLLVSGV), 133 to 153 (LAAGLTLLGLFSYVILYTVIL), 161 to 181 (IVFGGVAGAIPPLVGASAATG), 189 to 209 (WLFGLVMLWTPAHFWALAILL), 246 to 266 (IMGVFALPEGGLLYGIMLLPF), and 287 to 307 (AKSLFRWSILYMFGICLLLLI).

The protein belongs to the UbiA prenyltransferase family. Protoheme IX farnesyltransferase subfamily.

Its subcellular location is the cell inner membrane. It catalyses the reaction heme b + (2E,6E)-farnesyl diphosphate + H2O = Fe(II)-heme o + diphosphate. It participates in porphyrin-containing compound metabolism; heme O biosynthesis; heme O from protoheme: step 1/1. Converts heme B (protoheme IX) to heme O by substitution of the vinyl group on carbon 2 of heme B porphyrin ring with a hydroxyethyl farnesyl side group. The protein is Protoheme IX farnesyltransferase of Prochlorococcus marinus (strain MIT 9215).